A 271-amino-acid chain; its full sequence is Short-chain dehydrogenase/reductase SAT3 (271 aa).

NADP(+) contacts are provided by S17, D40, and N67. The active-site Proton donor is the S153. NADP(+)-binding residues include Y168, K172, and S203. Y168 acts as the Proton acceptor in catalysis. K172 (lowers pKa of active site Tyr) is an active-site residue.

It belongs to the short-chain dehydrogenases/reductases (SDR) family.

Its pathway is mycotoxin biosynthesis. Its function is as follows. Short-chain dehydrogenase/reductase; part of the satratoxin SC1 cluster involved in the biosynthesis of satratoxins, trichothecene mycotoxins that are associated with human food poisonings. Satratoxins are suggested to be made by products of multiple gene clusters (SC1, SC2 and SC3) that encode 21 proteins in all, including polyketide synthases, acetyltransferases, and other enzymes expected to modify the trichothecene skeleton. SC1 encodes 10 proteins, SAT1 to SAT10. The largest are SAT8, which encodes a putative polyketide synthase (PKS) with a conventional non-reducing architecture, and SAT10, a putative protein containing four ankyrin repeats and thus may be involved in protein scaffolding. The putative short-chain reductase SAT3 may assist the PKS in some capacity. SAT6 contains a secretory lipase domain and acts probably as a trichothecene esterase. SAT5 encodes a putative acetyltransferase, and so, with SAT6, may affect endogenous protection from toxicity. The probable transcription factor SAT9 may regulate the expression of the SC1 cluster. SC2 encodes proteins SAT11 to SAT16, the largest of which encodes the putative reducing PKS SAT13. SAT11 is a cytochrome P450 monooxygenase, while SAT14 and SAT16 are probable acetyltransferases. The SC2 cluster may be regulated by the transcription factor SAT15. SC3 is a small cluster that encodes 5 proteins, SAT17 to SAT21. SAT21 is a putative MFS-type transporter which may have a role in exporting secondary metabolites. The four other proteins putatively encoded in SC3 include the taurine hydroxylase-like protein SAT17, the O-methyltransferase SAT18, the acetyltransferase SAT19, and the Cys6-type zinc finger SAT20, the latter being probably involved in regulation of SC3 expression. The chain is Short-chain dehydrogenase/reductase SAT3 from Stachybotrys chartarum (strain CBS 109288 / IBT 7711) (Toxic black mold).